The sequence spans 652 residues: Acetyl-coenzyme A synthetase (652 aa).

Residues 191–194 (RAGR), T311, and N335 contribute to the CoA site. Residues 387–389 (GEP), 411–416 (DTWWQT), D500, and R515 contribute to the ATP site. A CoA-binding site is contributed by S523. R526 provides a ligand contact to ATP. Residues V537, H539, and I542 each contribute to the Mg(2+) site. Position 584 (R584) interacts with CoA. The residue at position 609 (K609) is an N6-acetyllysine.

Belongs to the ATP-dependent AMP-binding enzyme family. The cofactor is Mg(2+). Acetylated. Deacetylation by the SIR2-homolog deacetylase activates the enzyme.

The enzyme catalyses acetate + ATP + CoA = acetyl-CoA + AMP + diphosphate. In terms of biological role, catalyzes the conversion of acetate into acetyl-CoA (AcCoA), an essential intermediate at the junction of anabolic and catabolic pathways. Acs undergoes a two-step reaction. In the first half reaction, Acs combines acetate with ATP to form acetyl-adenylate (AcAMP) intermediate. In the second half reaction, it can then transfer the acetyl group from AcAMP to the sulfhydryl group of CoA, forming the product AcCoA. Its function is as follows. Enables the cell to use acetate during aerobic growth to generate energy via the TCA cycle, and biosynthetic compounds via the glyoxylate shunt. Acetylates CheY, the response regulator involved in flagellar movement and chemotaxis. This is Acetyl-coenzyme A synthetase from Citrobacter koseri (strain ATCC BAA-895 / CDC 4225-83 / SGSC4696).